The primary structure comprises 190 residues: Elongation factor P 2 (190 aa).

This sequence belongs to the elongation factor P family.

The protein resides in the cytoplasm. It participates in protein biosynthesis; polypeptide chain elongation. In terms of biological role, involved in peptide bond synthesis. Stimulates efficient translation and peptide-bond synthesis on native or reconstituted 70S ribosomes in vitro. Probably functions indirectly by altering the affinity of the ribosome for aminoacyl-tRNA, thus increasing their reactivity as acceptors for peptidyl transferase. The polypeptide is Elongation factor P 2 (efp2) (Chlamydia pneumoniae (Chlamydophila pneumoniae)).